Reading from the N-terminus, the 52-residue chain is uncharacterized protein (52 aa).

Residues 3–46 are a coiled coil; it reads KIQLESSNQSVLKLEERRLNLTAEIERIYGQMDLKRKELENANL.

This is an uncharacterized protein from Dictyostelium discoideum (Social amoeba).